The following is a 1391-amino-acid chain: CAP-Gly domain-containing linker protein 1 (1391 aa).

Residues 1–53 (MSMLKPSGLKAPTKILKPGSTALKTPAAAAAPVEKTIPSEKASGPPSSETQEE) are disordered. Phosphoserine is present on Ser48. Thr50 carries the post-translational modification Phosphothreonine. One can recognise a CAP-Gly 1 domain in the interval 78–120 (GETQFAPGQWAGIVLDEPIGKNDGSVAGVRYFQCEPLKGIFTR). The segment at 97-101 (GKNDG) is important for tubulin binding. Positions 129–182 (QAEDEANGLQAAPGRTASPLSTAAATMVSSSPATPSNIPHKPSQSTAKEPSATP) are disordered. Residue Ser146 is modified to Phosphoserine. Positions 146–182 (SPLSTAAATMVSSSPATPSNIPHKPSQSTAKEPSATP) are enriched in polar residues. Thr181 carries the post-translational modification Phosphothreonine. Residues Ser194, Ser196, Ser199, and Ser203 each carry the phosphoserine modification. A CAP-Gly 2 domain is found at 231–273 (GETDFAKGEWCGVELDEPLGKNDGAVAGTRYFQCQPKYGLFAP). The segment covering 302 to 331 (TPASLKRSPSASSLSSMSSVASSVSSKPSR) has biased composition (low complexity). The disordered stretch occupies residues 302 to 336 (TPASLKRSPSASSLSSMSSVASSVSSKPSRTGLLT). At Ser309 the chain carries Phosphoserine. Ser311 is modified (phosphoserine; by PKA). A phosphoserine mark is found at Ser314, Ser347, and Ser1189. A coiled-coil region spans residues 349-1306 (TTALQEALKE…VEMMSEAALN (958 aa)). The disordered stretch occupies residues 1251–1272 (KRQLSSSSGNTDAQAEEDERAQ). A Phosphoserine modification is found at Ser1317. The CCHC-type zinc finger occupies 1370–1387 (PYCEICEMFGHWATNCND).

In terms of assembly, interacts with MTOR; phosphorylates and regulates CLIP1. Interacts (via CAP-Gly domains) with tubulin. Interacts with SLAIN2. Interacts with TUBA1B, MAPRE1 and MAPRE3. Interacts (via zinc finger) with DCTN1. Binds preferentially to tyrosinated microtubules, and only marginally to detyrosinated microtubules. In terms of processing, phosphorylated. Phosphorylation induces conformational changes by increasing the affinity of the N-terminus for C-terminus, resulting in inhibition of its function thus decreasing its binding to microtubules and DCTN1. Exhibits a folded, autoinhibited conformation when phosphorylated and an open conformation when dephosphorylated with increased binding affinity to microtubules and DCTN1. Phosphorylation regulates its recruitment to tyrosinated microtubules and the recruitment of vesicular cargo to microtubules in neurons. Phosphorylation by MTOR may positively regulate CLIP1 association with microtubules. In terms of tissue distribution, expressed in the testes (at protein level).

The protein localises to the cytoplasm. It localises to the cytoskeleton. It is found in the cytoplasmic vesicle membrane. The protein resides in the cell projection. Its subcellular location is the ruffle. Functionally, binds to the plus end of microtubules and regulates the dynamics of the microtubule cytoskeleton. Promotes microtubule growth and microtubule bundling. Links cytoplasmic vesicles to microtubules and thereby plays an important role in intracellular vesicle trafficking. Plays a role macropinocytosis and endosome trafficking. The chain is CAP-Gly domain-containing linker protein 1 (Clip1) from Mus musculus (Mouse).